A 281-amino-acid polypeptide reads, in one-letter code: Translation initiation factor IF3-4, chloroplastic (281 aa).

The N-terminal 51 residues, Met1 to Arg51, are a transit peptide targeting the chloroplast. Disordered stretches follow at residues Gly63 to Leu86 and Lys253 to Ile281. 2 stretches are compositionally biased toward basic and acidic residues: residues Pro70–Glu79 and Lys253–Val270.

Belongs to the IF-3 family. As to quaternary structure, monomer.

The protein localises to the plastid. It localises to the chloroplast. Functionally, chloroplast translation initiation factor that is essential for the coordination of leaf and chloroplast development. IF-3 binds to the 30S ribosomal subunit and shifts the equilibrium between 70S ribosomes and their 50S and 30S subunits in favor of the free subunits, thus enhancing the availability of 30S subunits on which protein synthesis initiation begins. The polypeptide is Translation initiation factor IF3-4, chloroplastic (Arabidopsis thaliana (Mouse-ear cress)).